The chain runs to 506 residues: Sucrose transport protein SUT3 (506 aa).

The Cytoplasmic segment spans residues 1–20 (MAVDMELDGGGDGKGKAPPQ). The helical transmembrane segment at 21–41 (ISLSGLFLACMVAGGVQYGWA) threads the bilayer. Residues 42-54 (LQLSLLTPYVQTL) lie on the Extracellular side of the membrane. A helical transmembrane segment spans residues 55-75 (GIPHALTSVMWLCGPIAGLIV). At 76-94 (QPCVGLYSDKCTSSLGRRR) the chain is on the cytoplasmic side. The chain crosses the membrane as a helical span at residues 95-115 (PFILTGCIIICISVIVIGFSS). The Extracellular segment spans residues 116–135 (DIGYALGDTTEDCKVYRGPR). Residues 136 to 156 (YHAAAAFILGFWLLDFSNNTV) traverse the membrane as a helical segment. Topologically, residues 157-171 (QGPARALMADLSGRH) are cytoplasmic. Residues 172–192 (GPSAANAIFCSWMALGNILGY) traverse the membrane as a helical segment. The Extracellular segment spans residues 193–220 (SSGSTNDWHKWFPFLMTRACCEACANLK). The helical transmembrane segment at 221 to 241 (AAFLVAVVFLGLSTAVTMVFA) threads the bilayer. Residues 242–275 (REVALDPVAAAKRNEGEASGLLAVFKGMKNLPVG) lie on the Cytoplasmic side of the membrane. The chain crosses the membrane as a helical span at residues 276–296 (MPSVLIVTGLTWLSWFPFILF). Residues 297–327 (DTDWMGREIYHGRPDGSPAEVTAFQEGVRQG) are Extracellular-facing. The chain crosses the membrane as a helical span at residues 328–348 (AFGLLLNSIVLGISSFLIEPM). Topologically, residues 349–355 (CRRLGAR) are cytoplasmic. Residues 356–376 (AVWVMSSAVVCVAMAAVSVLS) traverse the membrane as a helical segment. Topologically, residues 377–404 (AWSLGDFGGSVQDAARAPAEEGGVRASA) are extracellular. Residues 405 to 425 (LALFVFLGLPFAVLCSVPFAV) form a helical membrane-spanning segment. The Cytoplasmic portion of the chain corresponds to 426–441 (TAQLAASRGGGQGLCT). The chain crosses the membrane as a helical span at residues 442 to 462 (GVLNISIVVPQMAIALGAGPW). Over 463 to 470 (DELFGEGN) the chain is Extracellular. The chain crosses the membrane as a helical span at residues 471–491 (IPAFAMASVFAAAAAAAGVVL). The Cytoplasmic segment spans residues 492–506 (LPKVSVRSVSMAGGH).

It belongs to the glycoside-pentoside-hexuronide (GPH) cation symporter transporter (TC 2.A.2.4) family. Homodimer. In terms of tissue distribution, widely expressed. Highest expression in sink leaves and lowest in germinating seeds.

Its subcellular location is the cell membrane. It participates in glycan biosynthesis; sucrose metabolism. In terms of biological role, responsible for the transport of sucrose into the cell, with the concomitant uptake of protons (symport system). May also transport other glucosides. This Oryza sativa subsp. japonica (Rice) protein is Sucrose transport protein SUT3 (SUT3).